A 129-amino-acid chain; its full sequence is Cocaine- and amphetamine-regulated transcript protein (129 aa).

An N-terminal signal peptide occupies residues M1 to A27. Y41 bears the Phosphotyrosine mark. S48 is modified (phosphoserine). 3 disulfides stabilise this stretch: C95–C113, C101–C121, and C115–C128.

This sequence belongs to the CART family. In terms of tissue distribution, neuroendocrine tissues. Predominantly expressed in the hypothalamus, pituitary, and longitudinal muscle-myenteric plexus. Abundant expression is also seen in the midbrain/thalamus and eye. A lower level expression is seen in the other brain regions and adrenal.

The protein resides in the secreted. Its function is as follows. Satiety factor closely associated with the actions of leptin and neuropeptide y; this anorectic peptide inhibits both normal and starvation-induced feeding and completely blocks the feeding response induced by neuropeptide Y and regulated by leptin in the hypothalamus. In Rattus norvegicus (Rat), this protein is Cocaine- and amphetamine-regulated transcript protein (Cartpt).